The chain runs to 526 residues: Opine oxidase subunit A (526 aa).

[2Fe-2S] cluster-binding residues include Cys-396, Cys-398, Cys-431, and Cys-436.

The protein to T-protein and to dimethylglycine dehydrogenase. As to quaternary structure, heterodimer of a subunit A and a subunit B. [2Fe-2S] cluster serves as cofactor.

It participates in opine metabolism; octopine degradation. In terms of biological role, oxidative cleavage of octopine into L-arginine and pyruvate. This is Opine oxidase subunit A (ooxA) from Rhizobium meliloti (Ensifer meliloti).